The sequence spans 615 residues: Elongation factor 4 (615 aa).

Residues 14-200 enclose the tr-type G domain; that stretch reads QQIRNFCIIA…KVAELIPAPT (187 aa). GTP is bound by residues 26–31 and 147–150; these read DHGKST and NKID.

It belongs to the TRAFAC class translation factor GTPase superfamily. Classic translation factor GTPase family. LepA subfamily.

Its subcellular location is the cell membrane. The catalysed reaction is GTP + H2O = GDP + phosphate + H(+). Required for accurate and efficient protein synthesis under certain stress conditions. May act as a fidelity factor of the translation reaction, by catalyzing a one-codon backward translocation of tRNAs on improperly translocated ribosomes. Back-translocation proceeds from a post-translocation (POST) complex to a pre-translocation (PRE) complex, thus giving elongation factor G a second chance to translocate the tRNAs correctly. Binds to ribosomes in a GTP-dependent manner. The protein is Elongation factor 4 of Corynebacterium diphtheriae (strain ATCC 700971 / NCTC 13129 / Biotype gravis).